A 361-amino-acid chain; its full sequence is Tegument protein UL51 homolog (361 aa).

C8 carries the S-palmitoyl cysteine; by host lipid modification. The disordered stretch occupies residues 251–299 (GDEEDEVTVMSPSPEPVQQQPPVEPVQQQPQGRGSHRRRYKESAPQETL). Residues 266–281 (PVQQQPPVEPVQQQPQ) are compositionally biased toward low complexity.

It belongs to the herpesviridae UL51 family. As to quaternary structure, oligomerizes. Interacts with UL103; this interaction mediates UL103 incorporation to virions. Post-translationally, phosphorylated. Palmitoylation is necessary for Golgi localization.

It localises to the virion tegument. Its subcellular location is the host cytoplasm. It is found in the host Golgi apparatus. In terms of biological role, plays several roles during the time course of infection, including egress of virus particles from the perinuclear space and secondary envelopment of cytoplasmic capsids that bud into specific trans-Golgi network (TGN)-derived membranes. The sequence is that of Tegument protein UL51 homolog (UL71) from Homo sapiens (Human).